The following is a 131-amino-acid chain: D-ribose pyranase (131 aa).

The active-site Proton donor is the H20. Substrate-binding positions include D28, H98, and 120–122 (YSN).

The protein belongs to the RbsD / FucU family. RbsD subfamily. In terms of assembly, homodecamer.

The protein localises to the cytoplasm. The enzyme catalyses beta-D-ribopyranose = beta-D-ribofuranose. It participates in carbohydrate metabolism; D-ribose degradation; D-ribose 5-phosphate from beta-D-ribopyranose: step 1/2. Catalyzes the interconversion of beta-pyran and beta-furan forms of D-ribose. The protein is D-ribose pyranase of Limosilactobacillus reuteri (strain DSM 20016) (Lactobacillus reuteri).